The following is a 386-amino-acid chain: 4-hydroxy-3-methylbut-2-en-1-yl diphosphate synthase (flavodoxin) (386 aa).

4 residues coordinate [4Fe-4S] cluster: cysteine 289, cysteine 292, cysteine 324, and glutamate 331.

This sequence belongs to the IspG family. It depends on [4Fe-4S] cluster as a cofactor.

The catalysed reaction is (2E)-4-hydroxy-3-methylbut-2-enyl diphosphate + oxidized [flavodoxin] + H2O + 2 H(+) = 2-C-methyl-D-erythritol 2,4-cyclic diphosphate + reduced [flavodoxin]. It functions in the pathway isoprenoid biosynthesis; isopentenyl diphosphate biosynthesis via DXP pathway; isopentenyl diphosphate from 1-deoxy-D-xylulose 5-phosphate: step 5/6. Functionally, converts 2C-methyl-D-erythritol 2,4-cyclodiphosphate (ME-2,4cPP) into 1-hydroxy-2-methyl-2-(E)-butenyl 4-diphosphate. The chain is 4-hydroxy-3-methylbut-2-en-1-yl diphosphate synthase (flavodoxin) from Nitratidesulfovibrio vulgaris (strain ATCC 29579 / DSM 644 / CCUG 34227 / NCIMB 8303 / VKM B-1760 / Hildenborough) (Desulfovibrio vulgaris).